Here is an 85-residue protein sequence, read N- to C-terminus: Putative membrane protein insertion efficiency factor (85 aa).

This sequence belongs to the UPF0161 family.

The protein localises to the cell inner membrane. In terms of biological role, could be involved in insertion of integral membrane proteins into the membrane. The chain is Putative membrane protein insertion efficiency factor from Vibrio cholerae serotype O1 (strain ATCC 39315 / El Tor Inaba N16961).